The following is a 227-amino-acid chain: MTANIPVITIDGPGGAGKGTLCKAMAEALGWHLLDSGAIYRVLALAALHHHVDVESEEALVPLAAHLDVRFISTDGTLEVVLEGEDVSGEIRTQEVANAASKVAAFPRVREALLRRQRAFRELPGLIADGRDMGTVVFPDAPVKIFLDASADERAHRRMRQLQEKGFDVNFERLLSEIKERDDRDRNRAVAPLVPAADALVLDSTELNIEQVIEKALQYAREKLAVA.

Position 12 to 20 (12 to 20 (GPGGAGKGT)) interacts with ATP.

This sequence belongs to the cytidylate kinase family. Type 1 subfamily.

It localises to the cytoplasm. The catalysed reaction is CMP + ATP = CDP + ADP. It carries out the reaction dCMP + ATP = dCDP + ADP. The protein is Cytidylate kinase of Klebsiella pneumoniae (strain 342).